A 156-amino-acid chain; its full sequence is RING finger protein 224 (156 aa).

The segment at 23-70 (CIICYSAYDLSVHLPRRLYCGHTFCQACMQRLDMPAHEQHWIPCPQCR) adopts an RING-type zinc-finger fold.

In Mus musculus (Mouse), this protein is RING finger protein 224 (Rnf224).